A 203-amino-acid polypeptide reads, in one-letter code: Octanoyltransferase (203 aa).

One can recognise a BPL/LPL catalytic domain in the interval 32–203 (ISTPDEIWLV…LMHKIREIFS (172 aa)). Substrate is bound by residues 71 to 78 (RGGKITYH), 138 to 140 (SLG), and 151 to 153 (GMA). Cys-169 serves as the catalytic Acyl-thioester intermediate.

This sequence belongs to the LipB family.

It localises to the cytoplasm. The enzyme catalyses octanoyl-[ACP] + L-lysyl-[protein] = N(6)-octanoyl-L-lysyl-[protein] + holo-[ACP] + H(+). It participates in protein modification; protein lipoylation via endogenous pathway; protein N(6)-(lipoyl)lysine from octanoyl-[acyl-carrier-protein]: step 1/2. Its function is as follows. Catalyzes the transfer of endogenously produced octanoic acid from octanoyl-acyl-carrier-protein onto the lipoyl domains of lipoate-dependent enzymes. Lipoyl-ACP can also act as a substrate although octanoyl-ACP is likely to be the physiological substrate. The sequence is that of Octanoyltransferase from Buchnera aphidicola subsp. Baizongia pistaciae (strain Bp).